A 557-amino-acid chain; its full sequence is 2-succinyl-5-enolpyruvyl-6-hydroxy-3-cyclohexene-1-carboxylate synthase (557 aa).

It belongs to the TPP enzyme family. MenD subfamily. Homodimer. The cofactor is Mg(2+). Mn(2+) serves as cofactor. Requires thiamine diphosphate as cofactor.

It catalyses the reaction isochorismate + 2-oxoglutarate + H(+) = 5-enolpyruvoyl-6-hydroxy-2-succinyl-cyclohex-3-ene-1-carboxylate + CO2. Its pathway is quinol/quinone metabolism; 1,4-dihydroxy-2-naphthoate biosynthesis; 1,4-dihydroxy-2-naphthoate from chorismate: step 2/7. The protein operates within quinol/quinone metabolism; menaquinone biosynthesis. Functionally, catalyzes the thiamine diphosphate-dependent decarboxylation of 2-oxoglutarate and the subsequent addition of the resulting succinic semialdehyde-thiamine pyrophosphate anion to isochorismate to yield 2-succinyl-5-enolpyruvyl-6-hydroxy-3-cyclohexene-1-carboxylate (SEPHCHC). This chain is 2-succinyl-5-enolpyruvyl-6-hydroxy-3-cyclohexene-1-carboxylate synthase, found in Staphylococcus aureus (strain MRSA252).